Reading from the N-terminus, the 187-residue chain is Cerebral dopamine neurotrophic factor (187 aa).

Residues 1 to 24 (MRCTSPAALVTFCAGLWISNHVLA) form the signal peptide. 3 disulfides stabilise this stretch: Cys-37/Cys-124, Cys-40/Cys-113, and Cys-71/Cys-82.

Belongs to the ARMET family.

Its subcellular location is the secreted. Its function is as follows. Trophic factor for dopamine neurons. Prevents the 6-hydroxydopamine (6-OHDA)-induced degeneration of dopaminergic neurons. When administered after 6-OHDA-lesioning, restores the dopaminergic function and prevents the degeneration of dopaminergic neurons in substantia nigra. In Rattus norvegicus (Rat), this protein is Cerebral dopamine neurotrophic factor (Cdnf).